We begin with the raw amino-acid sequence, 1397 residues long: DNA-directed RNA polymerase subunit beta' (1397 aa).

The Zn(2+) site is built by C75, C77, C90, and C93. D465, D467, and D469 together coordinate Mg(2+). Residues C819, C893, C900, and C903 each coordinate Zn(2+).

It belongs to the RNA polymerase beta' chain family. As to quaternary structure, the RNAP catalytic core consists of 2 alpha, 1 beta, 1 beta' and 1 omega subunit. When a sigma factor is associated with the core the holoenzyme is formed, which can initiate transcription. Mg(2+) is required as a cofactor. It depends on Zn(2+) as a cofactor.

It carries out the reaction RNA(n) + a ribonucleoside 5'-triphosphate = RNA(n+1) + diphosphate. Functionally, DNA-dependent RNA polymerase catalyzes the transcription of DNA into RNA using the four ribonucleoside triphosphates as substrates. The polypeptide is DNA-directed RNA polymerase subunit beta' (Acinetobacter baumannii (strain SDF)).